A 157-amino-acid chain; its full sequence is SsrA-binding protein (157 aa).

The segment at 130–157 (HDKRQDMAKKDSQRRIQKELGQRQKGME) is disordered. The span at 132–157 (KRQDMAKKDSQRRIQKELGQRQKGME) shows a compositional bias: basic and acidic residues.

It belongs to the SmpB family.

The protein localises to the cytoplasm. In terms of biological role, required for rescue of stalled ribosomes mediated by trans-translation. Binds to transfer-messenger RNA (tmRNA), required for stable association of tmRNA with ribosomes. tmRNA and SmpB together mimic tRNA shape, replacing the anticodon stem-loop with SmpB. tmRNA is encoded by the ssrA gene; the 2 termini fold to resemble tRNA(Ala) and it encodes a 'tag peptide', a short internal open reading frame. During trans-translation Ala-aminoacylated tmRNA acts like a tRNA, entering the A-site of stalled ribosomes, displacing the stalled mRNA. The ribosome then switches to translate the ORF on the tmRNA; the nascent peptide is terminated with the 'tag peptide' encoded by the tmRNA and targeted for degradation. The ribosome is freed to recommence translation, which seems to be the essential function of trans-translation. This is SsrA-binding protein from Alkaliphilus metalliredigens (strain QYMF).